Reading from the N-terminus, the 202-residue chain is MEEQEIITTLKILIIGESGVGKSSLLLRFTEDTFDPEQAATIGVDFKVKTLTVEGNKTKLAIWDTAGQERFRTLTPSYYRGAQGVILVYDVSSKQSFNKLDAWLNELETFSTKHDMVKMLVGNKIDRANHEVTKDEGLKFARKHHMLFIEASAKTNDGVQCAFEELVEKIIQTPGLWETSSKNLTLSNHGPEGQGQSCYCVL.

Residues Ser18, Gly21, Lys22, Ser23, Ser24, Asp35, Pro36, Thr41, Gly67, Lys124, Asp126, and Ala153 each coordinate GTP. The Effector region motif lies at Gln38–Phe46. 2 S-geranylgeranyl cysteine lipidation sites follow: Cys198 and Cys200.

This sequence belongs to the small GTPase superfamily. Rab family.

The protein localises to the cell membrane. It catalyses the reaction GTP + H2O = GDP + phosphate + H(+). Its function is as follows. The small GTPases Rab are key regulators of intracellular membrane trafficking, from the formation of transport vesicles to their fusion with membranes. Rabs cycle between an inactive GDP-bound form and an active GTP-bound form that is able to recruit to membranes different sets of downstream effectors directly responsible for vesicle formation, movement, tethering and fusion. In Lymnaea stagnalis (Great pond snail), this protein is Ras-related protein Rab-18 (RAB18A).